Reading from the N-terminus, the 136-residue chain is Purkinje cell protein 2 homolog (136 aa).

Disordered regions lie at residues 1-64 (MMDQ…PEMD) and 86-136 (SSLP…TQAP). In terms of domain architecture, GoLoco 1 spans 23–45 (QEGFFNLLSHVQGDRMEGQRCSL). The span at 49-59 (PGQTTKSQSDP) shows a compositional bias: polar residues. In terms of domain architecture, GoLoco 2 spans 63-85 (MDSLMDMLASTQGRRMDDQRVTV). Residues 107 to 117 (LSPQPLLTPQD) show a composition bias toward polar residues. Ser-127 is subject to Phosphoserine.

Its function is as follows. May function as a cell-type specific modulator for G protein-mediated cell signaling. The protein is Purkinje cell protein 2 homolog (PCP2) of Homo sapiens (Human).